The primary structure comprises 592 residues: PiggyBac transposable element-derived protein 2 (592 aa).

Positions 31–69 (EEEESNNNREEIFIAPPDNAAGEFTDEDSGDEDSQRGAH) are disordered.

This is PiggyBac transposable element-derived protein 2 (PGBD2) from Homo sapiens (Human).